We begin with the raw amino-acid sequence, 1503 residues long: Mitogen-activated protein kinase-binding protein 1 (1503 aa).

WD repeat units follow at residues 89–130 (SSRK…QVAE), 133–174 (EHKY…VVAS), 176–214 (KVSSRVTAVSFSEDCSYFVTAGNRHIKFWYLDDSKTSKV), 271–310 (VELRTTVAHCISVTQEYIFCGCADGTVRLFNPSNLHFLST), 337–376 (ARYPDTIALTFDPTNQWLSCVYNDHSIYVWDVRDPKKVGK), 382–431 (YHSS…VHGS), 472–511 (DPRVGIRSVCISPNGQHLASGDRMGTLRIHELQSLSEMLK), 514–556 (AHDS…SLQQ), 560–601 (EHSS…EGVQ), 609–648 (VRKTTLYDMDVEPSWKYTAIGCQDRNIRIFNISSGKQKKL), 654–693 (GEDGTLIKVQTDPSGIYIATSCSDKNLSIFDFSSGECVAT), and 696–735 (GHSEIVTGMKFSNDCKHLISVSGDSCIFVWRLSSEMTISM). Disordered regions lie at residues 745–817 (RQRG…SSPA), 874–917 (LAPS…RLQT), and 951–1176 (VYPE…SWAS). Positions 784–796 (KEGEDEGTEEEEL) are enriched in acidic residues. Composition is skewed to polar residues over residues 905 to 917 (CVSQNERAPRLQT) and 957 to 972 (DSPTMDTSAFQVQAPT). The segment covering 1028-1043 (DLEEPAEGDEDEEEEG) has biased composition (acidic residues). Positions 1058-1068 (PDQEQFLKQHF) are enriched in basic and acidic residues. Positions 1089-1129 (SQSISSRFLLQVQTSPLREPSLSSSGLALTSRPDQVSQVSG) are enriched in polar residues. Serine 1193 bears the Phosphoserine mark. Disordered regions lie at residues 1217–1238 (QGSLGSLPQAGGCSSQPHSYQN) and 1369–1391 (QGPESLQPLSPEKTRNPVESSRP).

As to quaternary structure, can form homodimers (via C-terminus). Interacts (via C-terminus) with WDR62 (via C-terminus). Interacts with MAPK9. Interacts (via N-terminus) with NOD2; the interaction is enhanced in presence of muramyl dipeptide (MDP). Interacts with MAPK10. As to expression, ubiquitously expressed. Highest expression observed in brain.

The protein localises to the cytoplasm. It localises to the nucleus. The protein resides in the cytoskeleton. It is found in the spindle pole. In terms of biological role, negative regulator of NOD2 function. It down-regulates NOD2-induced processes such as activation of NF-kappa-B signaling, IL8 secretion and antibacterial response. Involved in JNK signaling pathway. The protein is Mitogen-activated protein kinase-binding protein 1 (Mapkbp1) of Mus musculus (Mouse).